A 278-amino-acid polypeptide reads, in one-letter code: Fasciclin-like arabinogalactan protein 5 (278 aa).

An N-terminal signal peptide occupies residues 1 to 24 (MGLKASLSLLSLTILLVFSKVVTA). The FAS1 domain occupies 25–169 (NNITLAFQKY…LSIIQITMPI (145 aa)). N-linked (GlcNAc...) asparagine glycosylation is found at Asn-26, Asn-74, Asn-126, and Asn-159. The tract at residues 199–257 (VVPAPGPAADDNSPDSAVPKTPPAPATDTPEADSPAPAPSADNEKIEAADKAKPSSSAS) is disordered. The segment covering 224–239 (ATDTPEADSPAPAPSA) has biased composition (low complexity). The span at 240–251 (DNEKIEAADKAK) shows a compositional bias: basic and acidic residues. A lipid anchor (GPI-anchor amidated serine) is attached at Ser-255. Positions 256-278 (ASKAGWSFDVILLLAFLASFAGF) are cleaved as a propeptide — removed in mature form.

This sequence belongs to the fasciclin-like AGP family.

The protein resides in the cell membrane. Its function is as follows. May be a cell surface adhesion protein. The polypeptide is Fasciclin-like arabinogalactan protein 5 (FLA5) (Arabidopsis thaliana (Mouse-ear cress)).